We begin with the raw amino-acid sequence, 379 residues long: Epoxyqueuosine reductase (379 aa).

The active-site Proton donor is the Asp139. The region spanning 181 to 213 (IPLPVDQPVEEGCGKCVACMTICPTGAIVEPYT) is the 4Fe-4S ferredoxin-type domain. Residues Cys193, Cys196, Cys199, Cys203, Cys219, Cys246, Cys249, and Cys253 each contribute to the [4Fe-4S] cluster site.

It belongs to the QueG family. As to quaternary structure, monomer. Cob(II)alamin serves as cofactor. Requires [4Fe-4S] cluster as cofactor.

It is found in the cytoplasm. It carries out the reaction epoxyqueuosine(34) in tRNA + AH2 = queuosine(34) in tRNA + A + H2O. The protein operates within tRNA modification; tRNA-queuosine biosynthesis. Catalyzes the conversion of epoxyqueuosine (oQ) to queuosine (Q), which is a hypermodified base found in the wobble positions of tRNA(Asp), tRNA(Asn), tRNA(His) and tRNA(Tyr). This is Epoxyqueuosine reductase from Shigella dysenteriae serotype 1 (strain Sd197).